The sequence spans 202 residues: MTRKSVLGEVREVQLAIQLIQLGARLQFLESEVGLSRERLIRLYKEIKGVSPPKGLLPFSTDWYMTWLANIHSSMFYNMYQFMKIHSDEEKVWILIKSYKLYLQQIAAQDSEPILDFTRAYTMVRFFDSDMLQLSTCCRCSGQFVAHAHDHKSGYVCVLCRPPSRAGKARGAKRGAEGEAGALGIEGMGFGVEAAPGGAGFH.

Zn(2+) is bound by residues Cys137, Cys140, Cys157, and Cys160.

Belongs to the FlhC family. Heterohexamer composed of two FlhC and four FlhD subunits. Each FlhC binds a FlhD dimer, forming a heterotrimer, and a hexamer assembles by dimerization of two heterotrimers. Zn(2+) is required as a cofactor.

The protein localises to the cytoplasm. Functionally, functions in complex with FlhD as a master transcriptional regulator that regulates transcription of several flagellar and non-flagellar operons by binding to their promoter region. Activates expression of class 2 flagellar genes, including fliA, which is a flagellum-specific sigma factor that turns on the class 3 genes. Also regulates genes whose products function in a variety of physiological pathways. This chain is Flagellar transcriptional regulator FlhC, found in Variovorax paradoxus (strain S110).